The chain runs to 407 residues: Phosphopentomutase (407 aa).

D10, D306, H311, D347, H348, and H359 together coordinate Mn(2+).

This sequence belongs to the phosphopentomutase family. The cofactor is Mn(2+).

It is found in the cytoplasm. It catalyses the reaction 2-deoxy-alpha-D-ribose 1-phosphate = 2-deoxy-D-ribose 5-phosphate. The enzyme catalyses alpha-D-ribose 1-phosphate = D-ribose 5-phosphate. It participates in carbohydrate degradation; 2-deoxy-D-ribose 1-phosphate degradation; D-glyceraldehyde 3-phosphate and acetaldehyde from 2-deoxy-alpha-D-ribose 1-phosphate: step 1/2. Its function is as follows. Isomerase that catalyzes the conversion of deoxy-ribose 1-phosphate (dRib-1-P) and ribose 1-phosphate (Rib-1-P) to deoxy-ribose 5-phosphate (dRib-5-P) and ribose 5-phosphate (Rib-5-P), respectively. The sequence is that of Phosphopentomutase from Salmonella gallinarum (strain 287/91 / NCTC 13346).